An 82-amino-acid polypeptide reads, in one-letter code: Cytochrome b559 subunit alpha (82 aa).

Residues 22–36 (VIHFVTLPSIFLAGF) form a helical membrane-spanning segment. His-24 contributes to the heme binding site.

The protein belongs to the PsbE/PsbF family. Heterodimer of an alpha subunit and a beta subunit. PSII is composed of 1 copy each of membrane proteins PsbA, PsbB, PsbC, PsbD, PsbE, PsbF, PsbH, PsbI, PsbJ, PsbK, PsbL, PsbM, PsbT, PsbX, PsbY, PsbZ, Psb30/Ycf12, peripheral proteins PsbO, CyanoQ (PsbQ), PsbU, PsbV and a large number of cofactors. It forms dimeric complexes. Heme b is required as a cofactor.

The protein localises to the cellular thylakoid membrane. Functionally, this b-type cytochrome is tightly associated with the reaction center of photosystem II (PSII). PSII is a light-driven water:plastoquinone oxidoreductase that uses light energy to abstract electrons from H(2)O, generating O(2) and a proton gradient subsequently used for ATP formation. It consists of a core antenna complex that captures photons, and an electron transfer chain that converts photonic excitation into a charge separation. In Parasynechococcus marenigrum (strain WH8102), this protein is Cytochrome b559 subunit alpha.